A 393-amino-acid chain; its full sequence is Elongation factor Tu (393 aa).

A tr-type G domain is found at 10–203 (KPHVNIGTIG…AVDNYIPEPV (194 aa)). A G1 region spans residues 19 to 26 (GHVDHGKT). 19–26 (GHVDHGKT) is a GTP binding site. Thr26 serves as a coordination point for Mg(2+). Residues 60–64 (GITIS) form a G2 region. The tract at residues 81 to 84 (DCPG) is G3. GTP contacts are provided by residues 81 to 85 (DCPGH) and 136 to 139 (NKVD). Residues 136–139 (NKVD) are G4. The tract at residues 173–175 (SAL) is G5.

This sequence belongs to the TRAFAC class translation factor GTPase superfamily. Classic translation factor GTPase family. EF-Tu/EF-1A subfamily. Monomer.

It is found in the cytoplasm. It carries out the reaction GTP + H2O = GDP + phosphate + H(+). GTP hydrolase that promotes the GTP-dependent binding of aminoacyl-tRNA to the A-site of ribosomes during protein biosynthesis. The sequence is that of Elongation factor Tu from Chlorobium phaeovibrioides (strain DSM 265 / 1930) (Prosthecochloris vibrioformis (strain DSM 265)).